A 269-amino-acid chain; its full sequence is Tryptophan synthase alpha chain (269 aa).

Residues Glu50 and Asp61 each act as proton acceptor in the active site.

It belongs to the TrpA family. As to quaternary structure, tetramer of two alpha and two beta chains.

The catalysed reaction is (1S,2R)-1-C-(indol-3-yl)glycerol 3-phosphate + L-serine = D-glyceraldehyde 3-phosphate + L-tryptophan + H2O. The protein operates within amino-acid biosynthesis; L-tryptophan biosynthesis; L-tryptophan from chorismate: step 5/5. Its function is as follows. The alpha subunit is responsible for the aldol cleavage of indoleglycerol phosphate to indole and glyceraldehyde 3-phosphate. The protein is Tryptophan synthase alpha chain of Buchnera aphidicola subsp. Baizongia pistaciae (strain Bp).